We begin with the raw amino-acid sequence, 449 residues long: Putative F-box/FBD/LRR-repeat protein At5g62970 (449 aa).

One can recognise an F-box domain in the interval 2–50 (DKISGFSDDELLVKILSFLPFKFAITTSVLSKQWKFLWMRVPKLEYDED). LRR repeat units follow at residues 27 to 52 (TTSV…EDSM), 81 to 107 (GHRM…RLKF), 158 to 185 (TLKL…HLER), 186 to 211 (VTYG…VVEL), 252 to 279 (YFKL…NITA), and 328 to 354 (IHNA…EFDE). The FBD domain maps to 368 to 418 (FWNQPNSVPQCLLSTLQTFEWSGYPGSVQGKDLATYILRKSRQLKIATISI).

This is Putative F-box/FBD/LRR-repeat protein At5g62970 from Arabidopsis thaliana (Mouse-ear cress).